We begin with the raw amino-acid sequence, 368 residues long: UDP-N-acetylglucosamine--N-acetylmuramyl-(pentapeptide) pyrophosphoryl-undecaprenol N-acetylglucosamine transferase (368 aa).

Residues 13–15 (TGG), asparagine 127, arginine 168, serine 200, isoleucine 254, and glutamine 299 contribute to the UDP-N-acetyl-alpha-D-glucosamine site.

It belongs to the glycosyltransferase 28 family. MurG subfamily.

The protein resides in the cell inner membrane. The enzyme catalyses di-trans,octa-cis-undecaprenyl diphospho-N-acetyl-alpha-D-muramoyl-L-alanyl-D-glutamyl-meso-2,6-diaminopimeloyl-D-alanyl-D-alanine + UDP-N-acetyl-alpha-D-glucosamine = di-trans,octa-cis-undecaprenyl diphospho-[N-acetyl-alpha-D-glucosaminyl-(1-&gt;4)]-N-acetyl-alpha-D-muramoyl-L-alanyl-D-glutamyl-meso-2,6-diaminopimeloyl-D-alanyl-D-alanine + UDP + H(+). It participates in cell wall biogenesis; peptidoglycan biosynthesis. Its function is as follows. Cell wall formation. Catalyzes the transfer of a GlcNAc subunit on undecaprenyl-pyrophosphoryl-MurNAc-pentapeptide (lipid intermediate I) to form undecaprenyl-pyrophosphoryl-MurNAc-(pentapeptide)GlcNAc (lipid intermediate II). The sequence is that of UDP-N-acetylglucosamine--N-acetylmuramyl-(pentapeptide) pyrophosphoryl-undecaprenol N-acetylglucosamine transferase from Parabacteroides distasonis (strain ATCC 8503 / DSM 20701 / CIP 104284 / JCM 5825 / NCTC 11152).